A 397-amino-acid chain; its full sequence is Elongation factor Tu (397 aa).

One can recognise a tr-type G domain in the interval 10-206; that stretch reads KPHVNIGTIG…AVDEYIPTPE (197 aa). A G1 region spans residues 19-26; it reads GHIDHGKT. 19–26 lines the GTP pocket; it reads GHIDHGKT. Thr-26 lines the Mg(2+) pocket. A G2 region spans residues 62-66; that stretch reads GITIS. Positions 83 to 86 are G3; that stretch reads DCPG. Residues 83 to 87 and 138 to 141 each bind GTP; these read DCPGH and NKCD. Residues 138–141 form a G4 region; it reads NKCD. The G5 stretch occupies residues 176 to 178; it reads AAF.

It belongs to the TRAFAC class translation factor GTPase superfamily. Classic translation factor GTPase family. EF-Tu/EF-1A subfamily. Monomer.

It localises to the cytoplasm. It catalyses the reaction GTP + H2O = GDP + phosphate + H(+). Functionally, GTP hydrolase that promotes the GTP-dependent binding of aminoacyl-tRNA to the A-site of ribosomes during protein biosynthesis. The sequence is that of Elongation factor Tu from Nocardioides sp. (strain ATCC BAA-499 / JS614).